We begin with the raw amino-acid sequence, 591 residues long: MTMMSDLSLDLVEEILCRVPITSLKAVRSSCKLWNVLSKNRILCKTEARNQFLGFTIMNHRLYSMRFNLHGIGLNENSEEFIDPSIKPIGNLLNQVEISKVFYCEGLLLCVTRNHSSKLVVWNPYLGEIRWIKTRNDYHIGVTYALGYDNNKNHMILRFFSEQGYYEIYDMNSSDSWDCFYGIPNKGLKCYQPGASLNGNAYFLTEGREVMEGYDCLLGFDFTTKKFGPLLSLSFSHDFIETGRLSCVKGEKLAVLYQRCYTYEMEVWVTTKIEPNAVSWSKFLAVEMEPLTSLKFNDDSGSFFIDEEKKIVVVFDIDESERNNTAYIIGDYGCLKEVDLDEVVNPQESVEVGDRIYSFSPFVCSCSYVPSLVKFKEDAEHERKDKKRKSKRKRTNKDGYDFILCFDFTTERFGQILPLPFKHSFRDTWTLSSVKEEKLAVAVLYWKNTCVMIEIWMTIKIDPNVESWSKFLRVDRKPCIDLRFDDRNDSFFIDEEKKVVVFFSSDKVKTSTAYVIGDNRYLRTVDLEKAANSQESVEVGERVYCFSPLVCSCSYYVPSLVKINHNAGRKRKEKKTKRKSKDKQMKLSNKV.

The F-box domain maps to 2–49 (TMMSDLSLDLVEEILCRVPITSLKAVRSSCKLWNVLSKNRILCKTEAR). Residues 567 to 581 (AGRKRKEKKTKRKSK) are compositionally biased toward basic residues. The segment at 567–591 (AGRKRKEKKTKRKSKDKQMKLSNKV) is disordered.

The chain is Putative F-box protein At1g32140 from Arabidopsis thaliana (Mouse-ear cress).